Consider the following 184-residue polypeptide: Large ribosomal subunit protein uL22 (184 aa).

The interval 160–184 (PEEEVAQKKKISQKKLKKQKLMARE) is disordered. Positions 167-184 (KKKISQKKLKKQKLMARE) are enriched in basic residues.

The protein belongs to the universal ribosomal protein uL22 family. In terms of assembly, component of the large ribosomal subunit.

It localises to the cytoplasm. In terms of biological role, component of the large ribosomal subunit. The ribosome is a large ribonucleoprotein complex responsible for the synthesis of proteins in the cell. The polypeptide is Large ribosomal subunit protein uL22 (RPL17) (Bos taurus (Bovine)).